The sequence spans 275 residues: MARELRNAKISFVSYVDKAANQTEFFFTKSAEPPSFEKKVRLFTKSEQDEQKLVYGIVYEPDVPDAHGDFMTAEEIEKAAHGFLAEAREIDINHSFEGGTGVVVESYVAPDDFMIGSKRITKGSWVLVTRASDEVWEQIKAGIITGYSMAGTADVYEEEPVEKAGFFSVFKQMLADKTGKETEEMRKEDMKESFEHALYPLLKRLERIEKNTDTEEKPEQTGDDERLKKLVEDMLAPLIERIEALEKARGASKQTADDTGGNTEQVKKSIWSGLL.

Residues 247 to 275 (KARGASKQTADDTGGNTEQVKKSIWSGLL) form a disordered region.

This sequence to B.subtilis YqbD.

The chain is Phage-like element PBSX protein XkdF (xkdF) from Bacillus subtilis (strain 168).